Here is a 270-residue protein sequence, read N- to C-terminus: uncharacterized protein (270 aa).

The Cytoplasmic portion of the chain corresponds to 1–37 (MATHTSKRRIHRWENNELSEENSTIIYFPARGLMWTH). The helical transmembrane segment at 38-58 (FPFVLGICLEFVGYVLKIVFI) threads the bilayer. The Extracellular portion of the chain corresponds to 59–65 (NSPSIST). Residues 66 to 86 (FIAQSVLLLIAPSLYALSIFM) traverse the membrane as a helical segment. Residues 87 to 93 (LFSKMAR) lie on the Cytoplasmic side of the membrane. Residues 94 to 114 (LILMEAYMLIPAKFSTVSFVV) form a helical membrane-spanning segment. The Extracellular segment spans residues 115-140 (ADMIGRVLQAVGGGLLSSWNSRNTGR). The chain crosses the membrane as a helical span at residues 141-161 (ILIIVGLFIQIFCYTFLTFSQ). Topologically, residues 162 to 181 (LFLHYKMKATPSKIVRDSNE) are cytoplasmic. The chain crosses the membrane as a helical span at residues 182-202 (WFQYNFILLAGILLVNGRTIV). The Extracellular portion of the chain corresponds to 203-220 (RVVQFLMGLQSYIGQHEW). Residues 221–241 (CLYVFDTVLMFLLPLIFLATF) traverse the membrane as a helical segment. Over 242-270 (RARNLFKLQDKSVNIQLNKLLDKESVSED) the chain is Cytoplasmic.

The protein belongs to the lipid-translocating exporter (LTE) (TC 9.A.26.1) family.

The protein resides in the membrane. This is an uncharacterized protein from Saccharomyces cerevisiae (strain ATCC 204508 / S288c) (Baker's yeast).